Reading from the N-terminus, the 516-residue chain is Cysteine--tRNA ligase (516 aa).

Residue Cys32 coordinates Zn(2+). The 'HIGH' region signature appears at Pro34 to Asn44. Residues Cys230, His255, and Glu259 each coordinate Zn(2+). The 'KMSKS' region motif lies at Lys287 to Ser291. Residue Lys290 participates in ATP binding.

This sequence belongs to the class-I aminoacyl-tRNA synthetase family. In terms of assembly, monomer. It depends on Zn(2+) as a cofactor.

Its subcellular location is the cytoplasm. It carries out the reaction tRNA(Cys) + L-cysteine + ATP = L-cysteinyl-tRNA(Cys) + AMP + diphosphate. The sequence is that of Cysteine--tRNA ligase from Salinibacter ruber (strain DSM 13855 / M31).